A 322-amino-acid chain; its full sequence is Retinal homeobox protein Rx-A (322 aa).

The Octapeptide motif motif lies at His32–Gly39. Residues Thr75 to Asp87 show a composition bias toward basic and acidic residues. The disordered stretch occupies residues Thr75–Thr136. The segment covering Lys100–Asn117 has biased composition (polar residues). Residues His130–Glu189 constitute a DNA-binding region (homeobox). Residues Asn302–Ile315 carry the OAR motif. The Nuclear localization signal motif lies at Arg308–Lys312.

This sequence belongs to the paired homeobox family. Bicoid subfamily. In terms of tissue distribution, highly expressed in anterior neural plate followed by neural retina, pigmented epithelium, in pineal gland, diencephalon floor and epiphysis. At later stages, the neuroretina remains the primary site of expression. No expression in the developing lens and cornea.

The protein resides in the nucleus. Functionally, plays a critical role in eye formation by regulating the initial specification of retinal cells and/or their subsequent proliferation. This Xenopus laevis (African clawed frog) protein is Retinal homeobox protein Rx-A (rax-a).